The following is a 521-amino-acid chain: NADH-quinone oxidoreductase subunit N (521 aa).

The next 14 helical transmembrane spans lie at Leu15–Leu35, Ile43–Met63, Leu98–Thr118, Ala128–Gly148, Leu150–Leu170, Val185–Val205, Ala227–Ala247, Pro261–Phe281, Val303–Leu323, Leu331–Val351, Val363–Ile383, Ala406–Phe426, Trp442–Ile462, and Thr485–Met505.

This sequence belongs to the complex I subunit 2 family. NDH-1 is composed of 14 different subunits. Subunits NuoA, H, J, K, L, M, N constitute the membrane sector of the complex.

The protein resides in the cell membrane. The catalysed reaction is a quinone + NADH + 5 H(+)(in) = a quinol + NAD(+) + 4 H(+)(out). In terms of biological role, NDH-1 shuttles electrons from NADH, via FMN and iron-sulfur (Fe-S) centers, to quinones in the respiratory chain. The immediate electron acceptor for the enzyme in this species is believed to be a menaquinone. Couples the redox reaction to proton translocation (for every two electrons transferred, four hydrogen ions are translocated across the cytoplasmic membrane), and thus conserves the redox energy in a proton gradient. This is NADH-quinone oxidoreductase subunit N from Paenibacillus sp. (strain JDR-2).